The primary structure comprises 490 residues: MDLVMLLVLTLTCLILLSIWRQSSGRGKLPPGPIPLPIIGNIFQLNVKNITQSLTSFSKVYGPVFTLYFGTKPTVILHGYEAVKEALIDHGEEFAERGSFPVAEKINKDLGIVFSHGNRWKEIRRFTLTTLRNLGMGKRNIEDRVQEEARCLVEELRKTNGSPCDPTFILGCAPCNVICSIIFQNRFDYKDQDFLNLMEKLNENMKILSSPWTQFCSFFPVLIDYCPGSHTTLAKNVYHIRNYLLKKIKEHQESLDVTNPRDFIDYYLIKWKQENHNPHSEFTLENLSITVTDLFGAGTETTSTTLRYALLLLLKCPEVTAKVQEEIDRVVGKHRSPCMQDRSRMPYTDAHDHEVQRFIDLIPTNLPHAVTCDIKFRNYLIPKGTTIITSLSSVLHDSKEFPDPEIFDPGHFLDGNGKFKKSDYFMPFSAGKRMCAGEGLARMELFLFLTTILQNFKLKSVLHPKDIDTTPVFNGFASLPPFYELCFIPL.

Residues Lys249 and Lys375 each carry the N6-acetyllysine modification. Cys435 is a heme binding site.

The protein belongs to the cytochrome P450 family. The cofactor is heme.

It localises to the endoplasmic reticulum membrane. The protein localises to the microsome membrane. It catalyses the reaction an organic molecule + reduced [NADPH--hemoprotein reductase] + O2 = an alcohol + oxidized [NADPH--hemoprotein reductase] + H2O + H(+). Functionally, cytochromes P450 are a group of heme-thiolate monooxygenases. In liver microsomes, this enzyme is involved in an NADPH-dependent electron transport pathway. It oxidizes a variety of structurally unrelated compounds, including steroids, fatty acids, and xenobiotics. The protein is Cytochrome P450 2C6 (Cyp2c6) of Rattus norvegicus (Rat).